A 264-amino-acid polypeptide reads, in one-letter code: Small ribosomal subunit protein uS3 (264 aa).

One can recognise a KH type-2 domain in the interval 39–107; that stretch reads VRDFLKKKLK…PVHVNIEEIR (69 aa). Residues 211–264 form a disordered region; that stretch reads NDAPVVEEPQDDRRRRPGRPEGRRREGEGRPGGNRRGGAGAGRRAAPGDAKSGE. The span at 221 to 239 shows a compositional bias: basic and acidic residues; sequence DDRRRRPGRPEGRRREGEG. Residues 240-251 are compositionally biased toward gly residues; it reads RPGGNRRGGAGA.

It belongs to the universal ribosomal protein uS3 family. As to quaternary structure, part of the 30S ribosomal subunit. Forms a tight complex with proteins S10 and S14.

Its function is as follows. Binds the lower part of the 30S subunit head. Binds mRNA in the 70S ribosome, positioning it for translation. In Cupriavidus pinatubonensis (strain JMP 134 / LMG 1197) (Cupriavidus necator (strain JMP 134)), this protein is Small ribosomal subunit protein uS3.